A 90-amino-acid chain; its full sequence is Phosphoribosyl-ATP pyrophosphatase (90 aa).

It belongs to the PRA-PH family.

Its subcellular location is the cytoplasm. The catalysed reaction is 1-(5-phospho-beta-D-ribosyl)-ATP + H2O = 1-(5-phospho-beta-D-ribosyl)-5'-AMP + diphosphate + H(+). The protein operates within amino-acid biosynthesis; L-histidine biosynthesis; L-histidine from 5-phospho-alpha-D-ribose 1-diphosphate: step 2/9. The protein is Phosphoribosyl-ATP pyrophosphatase (hisE) of Streptomyces coelicolor (strain ATCC BAA-471 / A3(2) / M145).